The chain runs to 707 residues: MNYSLFISCSKGLEYLLEDELKGLGLHVTQVSPQGVYGEASLPVIYNLCLWSRLANRIQLILFSGHATKEQAVHQLCTDFHWQTVFTHDKTIAIEFHGASEQIRNTMFGAQIVKDGIVDHFRRLNGSRPSVDKEKPQILIHAHLKNDILTVSFDLVGYSLHQRGYRKKAGKAPLKENVAAAMLLRAKWPELAAQGYSLHDPFCGSGTLVIEAAMMAAHIAPGLLRQDQSLQYWARHQSSLWEKLRTQALQQVKPLAVKLIGTDADSKIITLARSNAERAGVLPLVEFNTLSLNACRPGTKRGLVVCNPPYGERLGEVTQLVPLYQELGTTLHTCYQGWQAAILTSSPVLAKALGLRADKQYTLYNGPLECKLYCLTLSAANKLKNTPNAPLSDNAQMLFNRLEKNRNHLQKWARKNQITCYRIYDADLPEYAYAIDIYNDYAVLQEYAPPASIPVHKAEKRSLEMLQVVPRALGIHPEKLIVKQRKQQKGSEQYQKIGKTSQRLIVTEGKAKLIVNLYDYLDTGLFLDHRLMRLKFAQLEPGTRFLNCFCYTASASVHAALAGALTTNVDLSKTYLLWAEDNFRLNDINLSKHQFLQYDCKEWMKTTRDKFDVIFLDPPSFSNSKRMSDILDIQRDHVSLINMAMRLLNPDGVLYFSTNLRQFKLEPMLKEKYAVQDITPQTIDQDFKRNSKIHHCFKIVMPHFADN.

Positions 44–155 (VIYNLCLWSR…NDILTVSFDL (112 aa)) constitute a THUMP domain.

This sequence belongs to the methyltransferase superfamily. RlmKL family.

Its subcellular location is the cytoplasm. The catalysed reaction is guanosine(2445) in 23S rRNA + S-adenosyl-L-methionine = N(2)-methylguanosine(2445) in 23S rRNA + S-adenosyl-L-homocysteine + H(+). The enzyme catalyses guanosine(2069) in 23S rRNA + S-adenosyl-L-methionine = N(2)-methylguanosine(2069) in 23S rRNA + S-adenosyl-L-homocysteine + H(+). Its function is as follows. Specifically methylates the guanine in position 2445 (m2G2445) and the guanine in position 2069 (m7G2069) of 23S rRNA. In Legionella pneumophila subsp. pneumophila (strain Philadelphia 1 / ATCC 33152 / DSM 7513), this protein is Ribosomal RNA large subunit methyltransferase K/L.